The sequence spans 865 residues: Protein translocase subunit SecA (865 aa).

ATP-binding positions include Q93, 111–115 (GEGKT), and D501. Residues C841, C843, C852, and C853 each coordinate Zn(2+).

The protein belongs to the SecA family. Monomer and homodimer. Part of the essential Sec protein translocation apparatus which comprises SecA, SecYEG and auxiliary proteins SecDF-YajC and YidC. Requires Zn(2+) as cofactor.

The protein resides in the cell inner membrane. It localises to the cytoplasm. It carries out the reaction ATP + H2O + cellular proteinSide 1 = ADP + phosphate + cellular proteinSide 2.. Its function is as follows. Part of the Sec protein translocase complex. Interacts with the SecYEG preprotein conducting channel. Has a central role in coupling the hydrolysis of ATP to the transfer of proteins into and across the cell membrane, serving as an ATP-driven molecular motor driving the stepwise translocation of polypeptide chains across the membrane. The chain is Protein translocase subunit SecA from Helicobacter pylori (strain HPAG1).